A 421-amino-acid chain; its full sequence is Peptide chain release factor subunit 1 (421 aa).

It belongs to the eukaryotic release factor 1 family. As to quaternary structure, heterodimer of two subunits, one of which binds GTP.

The protein localises to the cytoplasm. In terms of biological role, directs the termination of nascent peptide synthesis (translation) in response to the termination codons UAA, UAG and UGA. The protein is Peptide chain release factor subunit 1 (prf1) of Methanocaldococcus jannaschii (strain ATCC 43067 / DSM 2661 / JAL-1 / JCM 10045 / NBRC 100440) (Methanococcus jannaschii).